Consider the following 899-residue polypeptide: Solute carrier family 12 member 9 (899 aa).

At 1-44 (MTSESSPLLHYRLFSVSDGGLGPPDSSPIMTDAVTVGTGPTQRK) the chain is on the cytoplasmic side. Residues 45 to 65 (LSTFFGVVVPTVLSMFSIVVF) form a helical membrane-spanning segment. Residues 66-80 (MRIGFVVGHAGLLQS) are Extracellular-facing. Residues 81-101 (LLMLFVAYVIIWLTVLSVCAI) form a helical membrane-spanning segment. Residues 102–127 (STNGAVQGGGAYFMISRTLGPEFGGS) lie on the Cytoplasmic side of the membrane. Residues 128 to 148 (IGLMFYLANVFACGVYVLGLV) form a helical membrane-spanning segment. Residues 149–176 (EAVLDVFGRDPSDVTDSLRSLPQGYGYS) lie on the Extracellular side of the membrane. The chain crosses the membrane as a helical span at residues 177 to 197 (FLYASIILLLCMAICLVGASI). Residues 198–202 (YSQAS) lie on the Cytoplasmic side of the membrane. A helical transmembrane segment spans residues 203–223 (FFIFLLVFVVLLTILISFLAV). Topologically, residues 224-266 (RPLTVSIRHGGNVTMTGVYTGINSSTLHNNLQADYSLDYTTGN) are extracellular. N-linked (GlcNAc...) asparagine glycosylation is found at N235 and N246. The helical transmembrane segment at 267–287 (LMNFATVFAVMFNGCTGIMAG) threads the bilayer. The Cytoplasmic segment spans residues 288 to 304 (CNLSGELKQPSRSIPMG). A helical membrane pass occupies residues 305-325 (TIIAVIITFFVYLILFIFTAF). The Extracellular segment spans residues 326–347 (TCDRTLLREDYGFFRSINIWPP). Residues 348-368 (FVLIGVYATSLSASMSTLIGA) form a helical membrane-spanning segment. Residues 369 to 393 (SRILHALAKDDLFGVLLAPAKLVSK) are Cytoplasmic-facing. Residues 394-414 (GGNPWGAVVYTWALVQLVLLA) form a helical membrane-spanning segment. The Extracellular portion of the chain corresponds to 415–419 (GKLNT). The chain crosses the membrane as a helical span at residues 420 to 440 (IAGIVTVFYLIAYAAIDLACL). The Cytoplasmic segment spans residues 441-469 (ALEWASAPNFRPTFRFFSWHTCLLGILSS). A helical membrane pass occupies residues 470-490 (LVMMFLINPAYASGSIVLLLL). At 491 to 739 (LLGSIHFRSS…PLDLLRPQAS (249 aa)) the chain is on the extracellular side. Residues 740 to 760 (AYVDVCSLFLLQMACILNMAA) traverse the membrane as a helical segment. Residues 761 to 899 (SWRRYQLRVF…GLTPVTCTEL (139 aa)) are Cytoplasmic-facing.

Belongs to the SLC12A transporter family.

Its subcellular location is the cell membrane. The protein localises to the lysosome membrane. Functionally, seems to correspond to a subunit of a multimeric transport system and thus, additional subunits may be required for its function. May play a role in lysosomal ion flux and osmoregulation. This is Solute carrier family 12 member 9 (slc12a9) from Xenopus laevis (African clawed frog).